The primary structure comprises 246 residues: tRNA (guanine-N(1)-)-methyltransferase (246 aa).

S-adenosyl-L-methionine contacts are provided by residues G117 and 137–142 (IGDYVL).

This sequence belongs to the RNA methyltransferase TrmD family. In terms of assembly, homodimer.

The protein localises to the cytoplasm. The catalysed reaction is guanosine(37) in tRNA + S-adenosyl-L-methionine = N(1)-methylguanosine(37) in tRNA + S-adenosyl-L-homocysteine + H(+). In terms of biological role, specifically methylates guanosine-37 in various tRNAs. The polypeptide is tRNA (guanine-N(1)-)-methyltransferase (Acinetobacter baumannii (strain ACICU)).